The sequence spans 119 residues: Large ribosomal subunit protein uL18 (119 aa).

It belongs to the universal ribosomal protein uL18 family. Part of the 50S ribosomal subunit; part of the 5S rRNA/L5/L18/L25 subcomplex. Contacts the 5S and 23S rRNAs.

Functionally, this is one of the proteins that bind and probably mediate the attachment of the 5S RNA into the large ribosomal subunit, where it forms part of the central protuberance. This is Large ribosomal subunit protein uL18 from Lactobacillus delbrueckii subsp. bulgaricus (strain ATCC 11842 / DSM 20081 / BCRC 10696 / JCM 1002 / NBRC 13953 / NCIMB 11778 / NCTC 12712 / WDCM 00102 / Lb 14).